Here is a 353-residue protein sequence, read N- to C-terminus: Dihydroorotate dehydrogenase (quinone) (353 aa).

Residues 67–71 (AGFDK) and Thr91 each bind FMN. Lys71 contributes to the substrate binding site. Position 116–120 (116–120 (NRMGF)) interacts with substrate. FMN contacts are provided by Asn144 and Asn177. Asn177 lines the substrate pocket. The active-site Nucleophile is the Ser180. A substrate-binding site is contributed by Asn182. Residues Lys215 and Thr243 each coordinate FMN. 244–245 (NT) contributes to the substrate binding site. FMN is bound by residues Gly264, Gly293, and 314 to 315 (YT).

Belongs to the dihydroorotate dehydrogenase family. Type 2 subfamily. Monomer. It depends on FMN as a cofactor.

It localises to the cell membrane. It catalyses the reaction (S)-dihydroorotate + a quinone = orotate + a quinol. It functions in the pathway pyrimidine metabolism; UMP biosynthesis via de novo pathway; orotate from (S)-dihydroorotate (quinone route): step 1/1. Catalyzes the conversion of dihydroorotate to orotate with quinone as electron acceptor. This is Dihydroorotate dehydrogenase (quinone) from Gloeobacter violaceus (strain ATCC 29082 / PCC 7421).